The chain runs to 989 residues: RIRYKGIVCDRCGVEVTSSKVRRERMGHIELAAPVTHIWYFKGIPSRMGLVLDMSPRSLEEIIYFASYVVIEPGDAPVEKKQMVTEREYRQLKKEYGAGFKAGMGAEAIKELLANVDLAGERDELKRELQEATGQKRVRAVRRLDIVEAFLQSDNKPEWMVMDVVPVIPPDLRPMVQLEGGRFATSDLNDLYRRVINRNNRLKRLLDLNAPGIIVQNEKRMLQEAVDALIDNGRRGRPVAGPGNRPLKSLSHMLKGKQGRFRQNLLGKRVDYSGRSVIDVGPFLKMNQMGLPVPMAIELFRPFIMKELTTRKLAGNVKSAKRKIDKADGDVMDVLEDVIKEHPVLLNRAPTLHRLGIQAFEPVLVSGKAMRLHPLVTEAYNADFDGDQMAIHVPLSDEAQAEARLLMLAAGHILAPKDGKPIVAPSQDMVIGNYYLTTEEAGREGEGMIFSGVDEARIAFARKVVHYHTRVGIQTSSFPAEKPFTDEQRSKVMVTSVGKLIFNEILPTDFPFINEPSEDNFKGVDDRFFIESGEDIHDYLAETPIIGAFKKGFLSDIIAEVYKRYKVTETSLLLDRMKDLGYEKSTESGLTVAMTDVTDLKEKPAILEDAHNQVATVTKQFRRGLITDDERYQRVTEIWTKAKDIIQDKLIESFEPTNPIFMMQDSGARGNISNFVQLAGMRGLMAGPGGKIIELPVTANFREGLTVMEMFISTHGARKGMSDTALKTANSGYLTRRLVDVAQDVIVREFDNDSDRGVAVKAIMDGTSVVEPLYDRILGRYAMKSVFDPETGEKIVSRNEMIDEDVAKAIVNAGIEEVTIRSVFTSTTEHGVSVLDYGRNLASGEEVEVGEAVGTVAAQSIGEPGTQLTMRNFHTGGVAGGNDITQGLPRVQEIVEARIPKGRAEISEVTGVVTAIEENPAERTKAVTIEGETDTRTYTLPLTARMRFAEGDEIQRGDAINEGPIDPKELLAVTDTLTTESYMLTEIQK.

Aspartate 383, aspartate 385, and aspartate 387 together coordinate Mg(2+).

This sequence belongs to the RNA polymerase beta' chain family. In terms of assembly, the RNAP catalytic core consists of 2 alpha, 1 beta, 1 beta' and 1 omega subunit. When a sigma factor is associated with the core the holoenzyme is formed, which can initiate transcription. The cofactor is Mg(2+).

It carries out the reaction RNA(n) + a ribonucleoside 5'-triphosphate = RNA(n+1) + diphosphate. DNA-dependent RNA polymerase catalyzes the transcription of DNA into RNA using the four ribonucleoside triphosphates as substrates. The sequence is that of DNA-directed RNA polymerase subunit beta' (rpoC) from Leuconostoc pseudomesenteroides.